Reading from the N-terminus, the 548-residue chain is Membrane protein insertase YidC (548 aa).

The chain crosses the membrane as a helical span at residues 6 to 26 (NLLVIALLFVSFMIWQAWEQD). Positions 28-55 (NPQPQAQQTTQTTTTAAGSAADQGVPAS) are disordered. The segment covering 30-50 (QPQAQQTTQTTTTAAGSAADQ) has biased composition (low complexity). 4 helical membrane passes run 350 to 370 (FVGN…GIMY), 420 to 440 (LGGC…YYML), 458 to 478 (LSAQ…MFFI), and 499 to 519 (PVIF…YYIV).

This sequence belongs to the OXA1/ALB3/YidC family. Type 1 subfamily. Interacts with the Sec translocase complex via SecD. Specifically interacts with transmembrane segments of nascent integral membrane proteins during membrane integration.

The protein resides in the cell inner membrane. Functionally, required for the insertion and/or proper folding and/or complex formation of integral membrane proteins into the membrane. Involved in integration of membrane proteins that insert both dependently and independently of the Sec translocase complex, as well as at least some lipoproteins. Aids folding of multispanning membrane proteins. This is Membrane protein insertase YidC from Escherichia coli (strain K12 / MC4100 / BW2952).